Reading from the N-terminus, the 319-residue chain is Methionyl-tRNA formyltransferase (319 aa).

A (6S)-5,6,7,8-tetrahydrofolate-binding site is contributed by 112–115 (SLLP).

This sequence belongs to the Fmt family.

The catalysed reaction is L-methionyl-tRNA(fMet) + (6R)-10-formyltetrahydrofolate = N-formyl-L-methionyl-tRNA(fMet) + (6S)-5,6,7,8-tetrahydrofolate + H(+). Functionally, attaches a formyl group to the free amino group of methionyl-tRNA(fMet). The formyl group appears to play a dual role in the initiator identity of N-formylmethionyl-tRNA by promoting its recognition by IF2 and preventing the misappropriation of this tRNA by the elongation apparatus. The polypeptide is Methionyl-tRNA formyltransferase (Pelobacter propionicus (strain DSM 2379 / NBRC 103807 / OttBd1)).